Consider the following 367-residue polypeptide: Homoserine O-acetyltransferase (367 aa).

Positions 44–350 (NVIMVEHAWT…AYGHDAFLLE (307 aa)) constitute an AB hydrolase-1 domain. Residue Ser150 is the Nucleophile of the active site. Arg217 contributes to the substrate binding site. Active-site residues include Asp311 and His344. Asp345 is a binding site for substrate.

It belongs to the AB hydrolase superfamily. MetX family. Homodimer.

It localises to the cytoplasm. It carries out the reaction L-homoserine + acetyl-CoA = O-acetyl-L-homoserine + CoA. It functions in the pathway amino-acid biosynthesis; L-methionine biosynthesis via de novo pathway; O-acetyl-L-homoserine from L-homoserine: step 1/1. In terms of biological role, transfers an acetyl group from acetyl-CoA to L-homoserine, forming acetyl-L-homoserine. In vitro, can also use propionyl-CoA or butiryl-CoA as acyl donor. The chain is Homoserine O-acetyltransferase from Trichlorobacter lovleyi (strain ATCC BAA-1151 / DSM 17278 / SZ) (Geobacter lovleyi).